A 377-amino-acid polypeptide reads, in one-letter code: Deoxyribonuclease CdiA-o11 (377 aa).

The VENN CT cleavage motif motif lies at 81–84; sequence VENN. An inner membrane translocation domain (IMTD), targets to YciB region spans residues 85–233; it reads YLSTNQSLTF…ISFMSRNTAT (149 aa). The interval 88-377 is CT domain, sufficient to interact with CdiI; sequence TNQSLTFDKE…GVKVTVTQVK (290 aa). The segment at 222 to 377 is has DNase activity in vivo, cannot be expressed in the absence of CdiI; sequence AAISFMSRNT…GVKVTVTQVK (156 aa). Residues Glu-257, Asp-278, Ser-289, and Lys-291 contribute to the active site. 2 residues coordinate Zn(2+): Glu-257 and Asp-278.

As to quaternary structure, interacts with cognate immunity protein CdiI-o11-EC869, which blocks its toxic DNase activity. Zn(2+) is required as a cofactor.

Its subcellular location is the target cell. The protein resides in the target cell cytoplasm. In terms of biological role, toxic component of a toxin-immunity protein module, which functions as a cellular contact-dependent growth inhibition (CDI) system. CDI modules allow bacteria to communicate with and inhibit the growth of closely related neighboring bacteria in a contact-dependent fashion. The C-terminal 289 residues (the CT fragment) has a strong DNase activity in the presence of Zn(2+), completely degrading supercoiled and linear plasmids, and inhibits growth. In the presence of Mg(2+) it nicks dsDNA. Toxic activity is neutralized by coexpression of the cognate immunity protein CdiI-o11-EC869, but not by non-cognate immunity proteins from other toxin-immunity modules or other strains of E.coli. Gains access to the cytoplasm of target cells by using integral inner membrane protein YciB. Expression of this locus confers protection against other bacteria carrying the locus. The sequence is that of Deoxyribonuclease CdiA-o11 (cdiA4) from Escherichia coli O157:H7 (strain EC869).